Here is a 607-residue protein sequence, read N- to C-terminus: MIENLRNIAIIAHVDHGKTTLVDKLLQQSGTFDARAETQERVMDSNDLEKERGITILAKNTAIKWNDYRINIVDTPGHADFGGEVERVMSMVDSVLLVVDAFDGPMPQTRFVTKKAFAHGLKPIVVINKVDRPGARPDWVVDQVFDLFVNLDATDEQLDFPIIYASALNGIAGLDHEDMAEDMTPLYQAIVDHVPAPDVDLDGPLQMQISQLDYNNYVGVIGIGRIKRGKVKPNQQVTIIDSEGKTRNAKVGKVLTHLGLERIDSNIAEAGDIIAITGLGELNISDTICDPQNVEALPALSVDEPTVSMFFCVNTSPFCGKEGKFVTSRQILDRLNKELVHNVALRVEETEDADAFRVSGRGELHLSVLIENMRREGFELAVSRPKVIFREIDGRKQEPYENVTLDVEEQHQGSVMQALGERKGDLKNMNPDGKGRVRLDYVIPSRGLIGFRSEFMTMTSGTGLLYSTFSHYDDIRPGEVGQRQNGVLISNGQGKAVAFALFGLQDRGKLFLGHGAEVYEGQIIGIHSRSNDLTVNCLTGKKLTNMRASGTDEAVILVPPIKMSLEQALEFIDDDELVEVTPTSIRIRKRHLTENDRRRANRGQKEE.

The tr-type G domain occupies 3–198 (ENLRNIAIIA…AIVDHVPAPD (196 aa)). GTP is bound by residues 15-20 (DHGKTT) and 128-131 (NKVD). The segment at 481–607 (GQRQNGVLIS…RRANRGQKEE (127 aa)) is C-terminal domain (CTD), required but not sufficient to bind 70S or 30S ribosomes.

It belongs to the TRAFAC class translation factor GTPase superfamily. Classic translation factor GTPase family. BipA subfamily. In terms of assembly, monomer.

It localises to the cytoplasm. The enzyme catalyses GTP + H2O = GDP + phosphate + H(+). Ribosome-associated GTPase is not affected by low levels of ppGpp, &gt;40 uM ppGpp and &gt;50 uM GDP inhibit GTPase. The C-terminus (residues 387-607 or 481-607) inhibits GTPase activity, in its absence kcat increases, but GTPase is no longer stimulated by 70S ribosome or 30S or 50S subunits. Functionally, a 50S ribosomal subunit assembly protein with GTPase activity, required for 50S subunit assembly at low temperatures, may also play a role in translation. Binds GTP and analogs. Binds the 70S ribosome between the 30S and 50S subunits, in a similar position as ribosome-bound EF-G; it contacts a number of ribosomal proteins, both rRNAs and the A-site tRNA. A ribosome-stimulated GTPase, GTPase activity increases 4 fold in the presence of 70S ribosomes. Binds 70S ribosomes in the presence of GTP or its non-hydrolyzable analog GMPPNP; in the presence of ppGpp or under stress conditions it binds to 30S ribosomal subunits. In Salmonella typhimurium (strain LT2 / SGSC1412 / ATCC 700720), this protein is Large ribosomal subunit assembly factor BipA.